The sequence spans 250 residues: Tripartite motif-containing protein 73 (250 aa).

Residues C16–W57 form an RING-type zinc finger. The B box-type zinc-finger motif lies at P84–V125. Positions 89, 92, 111, and 117 each coordinate Zn(2+). 2 coiled-coil regions span residues V125–D169 and L204–E235.

It belongs to the TRIM/RBCC family.

This chain is Tripartite motif-containing protein 73 (TRIM73), found in Homo sapiens (Human).